The primary structure comprises 130 residues: Small ribosomal subunit protein uS9 (130 aa).

It belongs to the universal ribosomal protein uS9 family.

The protein is Small ribosomal subunit protein uS9 (rpsI) of Shigella flexneri.